A 142-amino-acid chain; its full sequence is MAWTSVLLMLLAHLTGCGPQPMVHQPPSASSSLGATIRLSCTLSNDHNIGIYSIYWYQQRPGHPPRFLLRYFSHSDKHQGPDIPPRFSGSKDTARNLGYLSISELQPEDEAVYYCAVGLRSHEKKRMEREWEGEKSYTDLGS.

An N-terminal signal peptide occupies residues 1 to 19 (MAWTSVLLMLLAHLTGCGP). Residues 20–41 (QPMVHQPPSASSSLGATIRLSC) are framework-1. C41 and C115 are disulfide-bonded. Residues 42 to 56 (TLSNDHNIGIYSIYW) form a complementarity-determining-1 region. Residues 57 to 70 (YQQRPGHPPRFLLR) are framework-2. The complementarity-determining-2 stretch occupies residues 71–81 (YFSHSDKHQGP). The tract at residues 82 to 115 (DIPPRFSGSKDTARNLGYLSISELQPEDEAVYYC) is framework-3.

Belongs to the immunoglobulin superfamily. In terms of tissue distribution, only expressed by pre-B-cells.

Functionally, associates with the Ig-mu chain to form a molecular complex that is expressed on the surface of pre-B-cells. This complex presumably regulates Ig gene rearrangements in the early steps of B-cell differentiation. The protein is Immunoglobulin omega chain of Mus musculus (Mouse).